The chain runs to 2546 residues: Formin-J (2546 aa).

Disordered stretches follow at residues Met1–Lys40, Glu61–Glu108, Lys188–Ala270, Thr369–Ser414, Thr502–Ser541, Ser802–Lys849, Thr879–Asn898, Thr987–Gly1101, Pro1485–Ser1529, Lys1558–Pro1601, Ile1659–Ser1775, Val1840–Ser1869, and Ser2014–Glu2033. 2 stretches are compositionally biased toward low complexity: residues Asn16–Ser37 and Asn62–Ser98. Composition is skewed to polar residues over residues Gly99 to Glu108 and Lys188 to Pro198. Composition is skewed to low complexity over residues Asn203–Asn237 and Asn247–Ala270. The span at Ala377 to Ile389 shows a compositional bias: polar residues. Low complexity-rich tracts occupy residues Ser390–Ser414 and Thr502–Ile513. The region spanning Thr391 to Leu444 is the FHA domain. Residues Lys457 to Gln963 form the GBD/FH3 domain. Polar residues-rich tracts occupy residues Thr879 to Leu891 and Ser992 to Pro1007. Pro residues predominate over residues Val1033–Gly1042. Low complexity predominate over residues Gly1043–Gly1056. Residues Gly1057 to Ile1097 show a composition bias toward pro residues. One can recognise an FH1 domain in the interval Ser1072 to Gly1098. Residues Lys1106–Asn1495 form the FH2 domain. A compositionally biased stretch (polar residues) spans Glu1492–Asp1502. Positions Ser1507–Ser1529 are enriched in low complexity. The DAD domain occupies Glu1563–Asp1593. A compositionally biased stretch (low complexity) spans Ser1665–Ser1679. The span at His1687–Thr1717 shows a compositional bias: basic and acidic residues. The segment covering Lys1732 to Lys1745 has biased composition (low complexity). A compositionally biased stretch (polar residues) spans Gln1746–Ser1757. Composition is skewed to low complexity over residues Arg1763–Ser1775 and Pro1841–Thr1853. Residues Ile2067–Gln2118 adopt a coiled-coil conformation. A compositionally biased stretch (low complexity) spans Gln2121–Gln2154. Disordered stretches follow at residues Gln2121–Val2369, Ser2381–Ser2473, and Ser2485–Pro2510. The segment covering Gln2160 to Tyr2179 has biased composition (polar residues). Composition is skewed to low complexity over residues Ala2188–Ser2206 and Ser2237–Ser2256. Residues Thr2274 to Thr2287 are compositionally biased toward polar residues. A compositionally biased stretch (low complexity) spans Ser2302–Ser2315. Residues Phe2332 to Ser2342 show a composition bias toward basic residues. 3 stretches are compositionally biased toward low complexity: residues Val2388–Ser2439, Asn2459–Ser2473, and Ser2485–Pro2497. A compositionally biased stretch (polar residues) spans Ala2499 to Lys2508.

The protein belongs to the formin homology family. Diaphanous subfamily. Interacts (via GBD/FH3 domain) with activated Rho-GTPases.

Its function is as follows. Formins play an important role in the nucleation of actin and the formation of linear actin filaments. This chain is Formin-J (forJ), found in Dictyostelium discoideum (Social amoeba).